The chain runs to 423 residues: Protein CLP1 homolog (423 aa).

ATP contacts are provided by residues Glu16, Lys57, and Asp119 to Thr124.

This sequence belongs to the Clp1 family. Clp1 subfamily.

It is found in the nucleus. Its function is as follows. Required for endonucleolytic cleavage during polyadenylation-dependent pre-mRNA 3'-end formation. The sequence is that of Protein CLP1 homolog (cbc) from Drosophila yakuba (Fruit fly).